The sequence spans 408 residues: Peptidase T (408 aa).

Position 78 (His78) interacts with Zn(2+). The active site involves Asp80. Asp140 provides a ligand contact to Zn(2+). Residue Glu173 is the Proton acceptor of the active site. Zn(2+)-binding residues include Glu174, Asp196, and His379.

It belongs to the peptidase M20B family. Requires Zn(2+) as cofactor.

It localises to the cytoplasm. It carries out the reaction Release of the N-terminal residue from a tripeptide.. In terms of biological role, cleaves the N-terminal amino acid of tripeptides. This is Peptidase T from Shigella boydii serotype 18 (strain CDC 3083-94 / BS512).